The primary structure comprises 124 residues: MATVNQLVRKPRSPKVIKTNVPALNACPQKRGVCTRVYTTTPKKPNSALRKVARVRLTNGFEVTSYIGGEGHNLQEHSVILIRGGRVKDLPGVRYHTVRGALDCAGVSERRQGRSKYGAKRPKS.

A 3-methylthioaspartic acid modification is found at aspartate 89.

It belongs to the universal ribosomal protein uS12 family. In terms of assembly, part of the 30S ribosomal subunit. Contacts proteins S8 and S17. May interact with IF1 in the 30S initiation complex.

Its function is as follows. With S4 and S5 plays an important role in translational accuracy. Functionally, interacts with and stabilizes bases of the 16S rRNA that are involved in tRNA selection in the A site and with the mRNA backbone. Located at the interface of the 30S and 50S subunits, it traverses the body of the 30S subunit contacting proteins on the other side and probably holding the rRNA structure together. The combined cluster of proteins S8, S12 and S17 appears to hold together the shoulder and platform of the 30S subunit. The sequence is that of Small ribosomal subunit protein uS12 from Shewanella loihica (strain ATCC BAA-1088 / PV-4).